A 322-amino-acid chain; its full sequence is Phosphatidylserine decarboxylase proenzyme (322 aa).

Catalysis depends on charge relay system; for autoendoproteolytic cleavage activity residues D90, H147, and S254. S254 serves as the catalytic Schiff-base intermediate with substrate; via pyruvic acid; for decarboxylase activity. S254 bears the Pyruvic acid (Ser); by autocatalysis mark. The disordered stretch occupies residues E294–T322. Over residues E303 to T322 the composition is skewed to basic and acidic residues.

The protein belongs to the phosphatidylserine decarboxylase family. PSD-B subfamily. Prokaryotic type I sub-subfamily. Heterodimer of a large membrane-associated beta subunit and a small pyruvoyl-containing alpha subunit. The cofactor is pyruvate. In terms of processing, is synthesized initially as an inactive proenzyme. Formation of the active enzyme involves a self-maturation process in which the active site pyruvoyl group is generated from an internal serine residue via an autocatalytic post-translational modification. Two non-identical subunits are generated from the proenzyme in this reaction, and the pyruvate is formed at the N-terminus of the alpha chain, which is derived from the carboxyl end of the proenzyme. The autoendoproteolytic cleavage occurs by a canonical serine protease mechanism, in which the side chain hydroxyl group of the serine supplies its oxygen atom to form the C-terminus of the beta chain, while the remainder of the serine residue undergoes an oxidative deamination to produce ammonia and the pyruvoyl prosthetic group on the alpha chain. During this reaction, the Ser that is part of the protease active site of the proenzyme becomes the pyruvoyl prosthetic group, which constitutes an essential element of the active site of the mature decarboxylase.

Its subcellular location is the cell membrane. It carries out the reaction a 1,2-diacyl-sn-glycero-3-phospho-L-serine + H(+) = a 1,2-diacyl-sn-glycero-3-phosphoethanolamine + CO2. It functions in the pathway phospholipid metabolism; phosphatidylethanolamine biosynthesis; phosphatidylethanolamine from CDP-diacylglycerol: step 2/2. Its function is as follows. Catalyzes the formation of phosphatidylethanolamine (PtdEtn) from phosphatidylserine (PtdSer). The sequence is that of Phosphatidylserine decarboxylase proenzyme from Salmonella arizonae (strain ATCC BAA-731 / CDC346-86 / RSK2980).